We begin with the raw amino-acid sequence, 387 residues long: Cysteine desulfurase IscS (387 aa).

Pyridoxal 5'-phosphate contacts are provided by residues 73 to 74, N155, Q183, and 203 to 205; these read AT and SAH. At K206 the chain carries N6-(pyridoxal phosphate)lysine. Residue T241 coordinates pyridoxal 5'-phosphate. Catalysis depends on C328, which acts as the Cysteine persulfide intermediate. C328 provides a ligand contact to [2Fe-2S] cluster.

This sequence belongs to the class-V pyridoxal-phosphate-dependent aminotransferase family. NifS/IscS subfamily. Homodimer. Forms a heterotetramer with IscU, interacts with other sulfur acceptors. The cofactor is pyridoxal 5'-phosphate.

It is found in the cytoplasm. It catalyses the reaction (sulfur carrier)-H + L-cysteine = (sulfur carrier)-SH + L-alanine. The protein operates within cofactor biosynthesis; iron-sulfur cluster biosynthesis. Functionally, master enzyme that delivers sulfur to a number of partners involved in Fe-S cluster assembly, tRNA modification or cofactor biosynthesis. Catalyzes the removal of elemental sulfur atoms from cysteine to produce alanine. Functions as a sulfur delivery protein for Fe-S cluster synthesis onto IscU, an Fe-S scaffold assembly protein, as well as other S acceptor proteins. This is Cysteine desulfurase IscS from Helicobacter pylori (strain ATCC 700392 / 26695) (Campylobacter pylori).